The primary structure comprises 212 residues: Tetraspanin-31-A (212 aa).

Residues 1-12 (MVCGGFTCSKNA) lie on the Cytoplasmic side of the membrane. Residues 13 to 33 (LCALNVVYMLVGLLLIGVAAW) traverse the membrane as a helical segment. The Extracellular segment spans residues 34-44 (GKGFGIVSSIH). The helical transmembrane segment at 45-65 (IIGGVIAIGVFLLLIAIIGLI) threads the bilayer. Residues 66–72 (GAVSHHQ) lie on the Cytoplasmic side of the membrane. Residues 73 to 93 (VMLFIYMVVLILVFIFQFIVS) traverse the membrane as a helical segment. Residues 94–175 (CSCLAMNRSQ…MLNHADEALK (82 aa)) lie on the Extracellular side of the membrane. N-linked (GlcNAc...) asparagine glycans are attached at residues N100, N109, N117, and N134. A helical transmembrane segment spans residues 176-196 (ILGGVGLFFSFTEILGVWLAF). The Cytoplasmic segment spans residues 197-212 (RFRNQKDPRANPSAFL).

The protein belongs to the tetraspanin (TM4SF) family.

It localises to the membrane. The polypeptide is Tetraspanin-31-A (tspan31-a) (Xenopus laevis (African clawed frog)).